We begin with the raw amino-acid sequence, 130 residues long: Capsid protein (130 aa).

The tract at residues 31-104 is viral RNA-binding; the sequence is EWLSNNSRSQ…FAATDDVTVI (74 aa).

The protein belongs to the Leviviricetes capsid protein family. As to quaternary structure, homodimer. The capsid proteins form dimers that assemble by group of 5. Twelve such pentamers are linked together with free dimers. The homodimers binds to the viral RNA via an operator hairpin, but also to many other RNA sequences in the viral genome; this interaction probably shifts the virus from the replicative to the assembly phase and ensures specific encapsidation of the viral genome.

It is found in the virion. In terms of biological role, capsid protein self-assembles to form an icosahedral capsid with a T=3 symmetry, about 26 nm in diameter, and consisting of 89 capsid proteins dimers (178 capsid proteins). Involved in viral genome encapsidation through the interaction between a capsid protein dimer and the multiple packaging signals present in the RNA genome. The capsid also contains 1 copy of the A2 maturation protein. Acts as a translational repressor of viral replicase synthesis late in infection. This latter function is the result of capsid protein interaction with an RNA hairpin which contains the replicase ribosome-binding site. The chain is Capsid protein from Escherichia coli (Bacteriophage GA).